The primary structure comprises 1133 residues: Error-prone DNA polymerase (1133 aa).

Belongs to the DNA polymerase type-C family. DnaE2 subfamily.

The protein resides in the cytoplasm. The enzyme catalyses DNA(n) + a 2'-deoxyribonucleoside 5'-triphosphate = DNA(n+1) + diphosphate. DNA polymerase involved in damage-induced mutagenesis and translesion synthesis (TLS). It is not the major replicative DNA polymerase. This is Error-prone DNA polymerase from Anaeromyxobacter sp. (strain K).